The following is a 186-amino-acid chain: Large ribosomal subunit protein uL22 (186 aa).

Positions 159 to 186 (KAAENEPAKKKLSKKKLQRQKEKMMRNE) are disordered. Over residues 177–186 (RQKEKMMRNE) the composition is skewed to basic and acidic residues.

Belongs to the universal ribosomal protein uL22 family.

This is Large ribosomal subunit protein uL22 (RpL17) from Aedes albopictus (Asian tiger mosquito).